A 1211-amino-acid chain; its full sequence is DNA-directed RNA polymerase subunit beta' (1211 aa).

Residues Cys60, Cys62, Cys75, and Cys78 each contribute to the Zn(2+) site. Mg(2+) contacts are provided by Asp450, Asp452, and Asp454. Residues Cys819, Cys893, Cys900, and Cys903 each coordinate Zn(2+).

Belongs to the RNA polymerase beta' chain family. As to quaternary structure, the RNAP catalytic core consists of 2 alpha, 1 beta, 1 beta' and 1 omega subunit. When a sigma factor is associated with the core the holoenzyme is formed, which can initiate transcription. Mg(2+) is required as a cofactor. Zn(2+) serves as cofactor.

It catalyses the reaction RNA(n) + a ribonucleoside 5'-triphosphate = RNA(n+1) + diphosphate. Functionally, DNA-dependent RNA polymerase catalyzes the transcription of DNA into RNA using the four ribonucleoside triphosphates as substrates. This Streptococcus equi subsp. equi (strain 4047) protein is DNA-directed RNA polymerase subunit beta'.